Here is a 227-residue protein sequence, read N- to C-terminus: Probable GTP-binding protein EngB (227 aa).

One can recognise an EngB-type G domain in the interval 13-188 (IGLEVAFAGR…AGVMGNWYEY (176 aa)). Residues 21-28 (GRSNAGKS), 48-52 (GRTQM), 67-70 (DLPG), 134-137 (TKAD), and 167-169 (FSA) contribute to the GTP site. Mg(2+) contacts are provided by serine 28 and threonine 50.

It belongs to the TRAFAC class TrmE-Era-EngA-EngB-Septin-like GTPase superfamily. EngB GTPase family. It depends on Mg(2+) as a cofactor.

Necessary for normal cell division and for the maintenance of normal septation. The protein is Probable GTP-binding protein EngB of Psychrobacter cryohalolentis (strain ATCC BAA-1226 / DSM 17306 / VKM B-2378 / K5).